The chain runs to 381 residues: Putative acyl-CoA dehydrogenase YdbM (381 aa).

Residues 158-160 (FTT) and 337-341 (RIVGA) each bind FAD.

It belongs to the acyl-CoA dehydrogenase family. FAD serves as cofactor.

The sequence is that of Putative acyl-CoA dehydrogenase YdbM (ydbM) from Bacillus subtilis (strain 168).